The primary structure comprises 307 residues: 3-ketodihydrosphingosine reductase TSC10 (307 aa).

Leu-11 is a binding site for NADP(+). Residues Gly-14, Ser-16, and Gly-18 each coordinate NADPH. Residues 14–18 (GGSQG) carry the GXSXG motif. NADP(+) is bound at residue Leu-19. NADPH-binding residues include Arg-40, Lys-44, and Leu-74. The active-site Proton donor is the Ser-147. Tyr-161, Lys-165, and Ser-194 together coordinate NADP(+). Residue Tyr-161 is the Proton acceptor of the active site. The active-site Lowers pKa of active site Tyr is Lys-165. Residues 261–281 (YFLWPLGWLLGALVNLLVVPI) form a helical membrane-spanning segment.

The protein belongs to the short-chain dehydrogenases/reductases (SDR) family.

Its subcellular location is the endoplasmic reticulum membrane. It carries out the reaction sphinganine + NADP(+) = 3-oxosphinganine + NADPH + H(+). It participates in lipid metabolism; sphingolipid metabolism. Functionally, catalyzes the reduction of 3'-oxosphinganine (3-ketodihydrosphingosine/KDS) to sphinganine (dihydrosphingosine/DHS), the second step of de novo sphingolipid biosynthesis. The polypeptide is 3-ketodihydrosphingosine reductase TSC10 (TSC10) (Eremothecium gossypii (strain ATCC 10895 / CBS 109.51 / FGSC 9923 / NRRL Y-1056) (Yeast)).